The primary structure comprises 337 residues: Ketol-acid reductoisomerase (NAD(P)(+)) (337 aa).

The KARI N-terminal Rossmann domain occupies 2-187 (ARMFYDADAN…GCTRAGVIET (186 aa)). NADP(+) contacts are provided by residues 25 to 28 (FGSQ), Arg-48, and 88 to 91 (DEVQ). The active site involves His-113. Residue Gly-139 participates in NADP(+) binding. In terms of domain architecture, KARI C-terminal knotted spans 188 to 333 (SFQEETETDL…AELRGMMPWL (146 aa)). Mg(2+) contacts are provided by Asp-196, Glu-200, Glu-232, and Glu-236. Ser-257 serves as a coordination point for substrate.

This sequence belongs to the ketol-acid reductoisomerase family. The cofactor is Mg(2+).

The catalysed reaction is (2R)-2,3-dihydroxy-3-methylbutanoate + NAD(+) = (2S)-2-acetolactate + NADH + H(+). It catalyses the reaction (2R)-2,3-dihydroxy-3-methylbutanoate + NADP(+) = (2S)-2-acetolactate + NADPH + H(+). It participates in amino-acid biosynthesis; L-isoleucine biosynthesis; L-isoleucine from 2-oxobutanoate: step 2/4. The protein operates within amino-acid biosynthesis; L-valine biosynthesis; L-valine from pyruvate: step 2/4. Involved in the biosynthesis of branched-chain amino acids (BCAA). Catalyzes an alkyl-migration followed by a ketol-acid reduction of (S)-2-acetolactate (S2AL) to yield (R)-2,3-dihydroxy-isovalerate. In the isomerase reaction, S2AL is rearranged via a Mg-dependent methyl migration to produce 3-hydroxy-3-methyl-2-ketobutyrate (HMKB). In the reductase reaction, this 2-ketoacid undergoes a metal-dependent reduction by NADPH or NADH to yield (R)-2,3-dihydroxy-isovalerate. The protein is Ketol-acid reductoisomerase (NAD(P)(+)) of Syntrophomonas wolfei subsp. wolfei (strain DSM 2245B / Goettingen).